A 560-amino-acid polypeptide reads, in one-letter code: Putative transport protein VS_1837 (560 aa).

The next 5 membrane-spanning stretches (helical) occupy residues 5 to 25, 37 to 57, 66 to 86, 91 to 111, and 155 to 175; these read VVLL…SIGL, LGNS…GFSF, FMLF…GIFF, HYLI…YFCS, and LGLV…VGLI. RCK C-terminal domains are found at residues 203–292 and 293–376; these read RGLG…FRNG and KEVF…KIGF. Helical transmembrane passes span 386-406, 409-429, 450-470, 478-498, 506-526, and 539-559; these read LTAF…TMTF, VSFG…LGFL, LGLM…IFEH, VIGI…LVGA, ALLF…DIVN, and AGTY…IIII.

This sequence belongs to the AAE transporter (TC 2.A.81) family. YbjL subfamily.

The protein resides in the cell membrane. The sequence is that of Putative transport protein VS_1837 from Vibrio atlanticus (strain LGP32) (Vibrio splendidus (strain Mel32)).